The following is a 382-amino-acid chain: uncharacterized protein (382 aa).

Transmembrane regions (helical) follow at residues 14-34 (GLLLLTLAIAVLNTLVPLWLA), 45-65 (VVSSSYFTGNLVGTLLTGYVI), 79-99 (FIFAAGCAGLGLMIGFWSWLA), 102-122 (FVAGIGCAMIWVVVESALMCS), 131-151 (LLAAYMMVYYVGTFLGQLLVS), 157-177 (LMSVLPWVTGLTLAGILPLLF), 204-224 (LGVNGCIISGIVLGSLYGLMP), 235-255 (ASIGFWMAVLVSAGILGQWPI), 270-290 (VQVFVVILGSIAMLSQAAMAP), 291-311 (ALFILGAAGFTLYPVAMAWAC), 325-345 (ALLLSYTVGSLLGPSFTAMLM), and 348-368 (FSDNLLFIMIASVSFIYLLML).

Belongs to the major facilitator superfamily. YcaD (TC 2.A.1.26) family.

It is found in the cell inner membrane. This is an uncharacterized protein from Escherichia coli O6:K15:H31 (strain 536 / UPEC).